Consider the following 93-residue polypeptide: RNA-binding protein Hfq (93 aa).

The 60-residue stretch at Asp9 to Phe68 folds into the Sm domain. The tract at residues Val70–Gln93 is disordered.

The protein belongs to the Hfq family. As to quaternary structure, homohexamer.

RNA chaperone that binds small regulatory RNA (sRNAs) and mRNAs to facilitate mRNA translational regulation in response to envelope stress, environmental stress and changes in metabolite concentrations. Also binds with high specificity to tRNAs. This chain is RNA-binding protein Hfq, found in Shewanella sediminis (strain HAW-EB3).